We begin with the raw amino-acid sequence, 203 residues long: Glycerol-3-phosphate acyltransferase (203 aa).

5 helical membrane-spanning segments follow: residues 6–26, 56–76, 82–102, 118–138, and 141–161; these read LTLA…AVLV, AAAM…YVAF, AVSL…PIFF, APIG…VVLI, and YSSL…WYFD.

Belongs to the PlsY family. Probably interacts with PlsX.

The protein localises to the cell inner membrane. It catalyses the reaction an acyl phosphate + sn-glycerol 3-phosphate = a 1-acyl-sn-glycero-3-phosphate + phosphate. It functions in the pathway lipid metabolism; phospholipid metabolism. Catalyzes the transfer of an acyl group from acyl-phosphate (acyl-PO(4)) to glycerol-3-phosphate (G3P) to form lysophosphatidic acid (LPA). This enzyme utilizes acyl-phosphate as fatty acyl donor, but not acyl-CoA or acyl-ACP. This Shewanella loihica (strain ATCC BAA-1088 / PV-4) protein is Glycerol-3-phosphate acyltransferase.